The following is a 431-amino-acid chain: Adenylosuccinate synthetase (431 aa).

Residues 12-18 (GDEGKGK) and 40-42 (GHT) each bind GTP. Residue Asp13 is the Proton acceptor of the active site. Positions 13 and 40 each coordinate Mg(2+). Residues 13–16 (DEGK), 38–41 (NAGH), Thr129, Arg143, Gln224, Thr239, and Arg303 contribute to the IMP site. Residue His41 is the Proton donor of the active site. 299–305 (TVSNRQR) contributes to the substrate binding site. Residues Arg305, 331–333 (KLD), and 413–415 (STG) contribute to the GTP site.

The protein belongs to the adenylosuccinate synthetase family. As to quaternary structure, homodimer. It depends on Mg(2+) as a cofactor.

The protein localises to the cytoplasm. The catalysed reaction is IMP + L-aspartate + GTP = N(6)-(1,2-dicarboxyethyl)-AMP + GDP + phosphate + 2 H(+). Its pathway is purine metabolism; AMP biosynthesis via de novo pathway; AMP from IMP: step 1/2. In terms of biological role, plays an important role in the de novo pathway of purine nucleotide biosynthesis. Catalyzes the first committed step in the biosynthesis of AMP from IMP. This is Adenylosuccinate synthetase from Ehrlichia canis (strain Jake).